The chain runs to 120 residues: Large ribosomal subunit protein bL20 (120 aa).

It belongs to the bacterial ribosomal protein bL20 family.

In terms of biological role, binds directly to 23S ribosomal RNA and is necessary for the in vitro assembly process of the 50S ribosomal subunit. It is not involved in the protein synthesizing functions of that subunit. This Desulforudis audaxviator (strain MP104C) protein is Large ribosomal subunit protein bL20.